The chain runs to 477 residues: Glycogen synthase (477 aa).

Lysine 15 provides a ligand contact to ADP-alpha-D-glucose.

This sequence belongs to the glycosyltransferase 1 family. Bacterial/plant glycogen synthase subfamily.

It carries out the reaction [(1-&gt;4)-alpha-D-glucosyl](n) + ADP-alpha-D-glucose = [(1-&gt;4)-alpha-D-glucosyl](n+1) + ADP + H(+). Its pathway is glycan biosynthesis; glycogen biosynthesis. Its function is as follows. Synthesizes alpha-1,4-glucan chains using ADP-glucose. In Streptococcus pneumoniae serotype 19F (strain G54), this protein is Glycogen synthase.